Reading from the N-terminus, the 335-residue chain is Olfactory receptor 9K2 (335 aa).

The Extracellular segment spans residues 1–50; that stretch reads MLGSKPRVHLYILPCASQQVSTMGDRGTSNHSEMTDFILAGFRVRPELHI. A glycan (N-linked (GlcNAc...) asparagine) is linked at Asn-30. The chain crosses the membrane as a helical span at residues 51-71; that stretch reads LLFLLFLFVYAMILLGNVGMM. The Cytoplasmic portion of the chain corresponds to 72 to 79; the sequence is TIIMTDPR. Residues 80–100 traverse the membrane as a helical segment; that stretch reads LNTPMYFFLGNLSFIDLFYSS. Residues 101 to 124 are Extracellular-facing; that stretch reads VIEPKAMINFWSENKSISFAGCVA. An N-linked (GlcNAc...) asparagine glycan is attached at Asn-114. Cysteines 122 and 214 form a disulfide. Residues 125-145 traverse the membrane as a helical segment; it reads QLFLFALLIVTEGFLLAAMAY. Residues 146 to 164 are Cytoplasmic-facing; it reads DRFIAICNPLLYSVQMSTR. Residues 165–185 traverse the membrane as a helical segment; that stretch reads LCTQLVAGSYFCGCISSVIQT. Over 186 to 222 the chain is Extracellular; that stretch reads SMTFTLSFCASRAVDHFYCDSRPLQRLSCSDLFIHRM. The helical transmembrane segment at 223–242 threads the bilayer; sequence ISFSLSCIIILPTIIVIIVS. The Cytoplasmic portion of the chain corresponds to 243–262; the sequence is YMYIVSTVLKIHSTEGHKKA. A helical membrane pass occupies residues 263-283; that stretch reads FSTCSSHLGVVSVLYGAVFFM. Over 284–296 the chain is Extracellular; it reads YLTPDRFPELSKV. Topologically, residues 316–335 are cytoplasmic; sequence RNKDVQEALKKFLEKKNIIL.

Belongs to the G-protein coupled receptor 1 family.

Its subcellular location is the cell membrane. Odorant receptor. The polypeptide is Olfactory receptor 9K2 (OR9K2) (Homo sapiens (Human)).